We begin with the raw amino-acid sequence, 326 residues long: Glycerol-3-phosphate dehydrogenase [NAD(P)+] (326 aa).

3 residues coordinate NADPH: tryptophan 15, arginine 35, and lysine 107. 3 residues coordinate sn-glycerol 3-phosphate: lysine 107, glycine 135, and serine 137. Alanine 139 contacts NADPH. Lysine 190, aspartate 243, serine 253, arginine 254, and asparagine 255 together coordinate sn-glycerol 3-phosphate. Residue lysine 190 is the Proton acceptor of the active site. Arginine 254 contributes to the NADPH binding site. Positions 273 and 275 each coordinate NADPH.

It belongs to the NAD-dependent glycerol-3-phosphate dehydrogenase family.

Its subcellular location is the cytoplasm. The catalysed reaction is sn-glycerol 3-phosphate + NAD(+) = dihydroxyacetone phosphate + NADH + H(+). It carries out the reaction sn-glycerol 3-phosphate + NADP(+) = dihydroxyacetone phosphate + NADPH + H(+). Its pathway is membrane lipid metabolism; glycerophospholipid metabolism. Catalyzes the reduction of the glycolytic intermediate dihydroxyacetone phosphate (DHAP) to sn-glycerol 3-phosphate (G3P), the key precursor for phospholipid synthesis. This Bradyrhizobium sp. (strain BTAi1 / ATCC BAA-1182) protein is Glycerol-3-phosphate dehydrogenase [NAD(P)+].